A 338-amino-acid polypeptide reads, in one-letter code: Probable tRNA pseudouridine synthase B (338 aa).

The active-site Nucleophile is the aspartate 78. The region spanning leucine 245–methionine 320 is the PUA domain.

Belongs to the pseudouridine synthase TruB family. Type 2 subfamily.

It carries out the reaction uridine(55) in tRNA = pseudouridine(55) in tRNA. Could be responsible for synthesis of pseudouridine from uracil-55 in the psi GC loop of transfer RNAs. The chain is Probable tRNA pseudouridine synthase B from Methanosarcina barkeri (strain Fusaro / DSM 804).